The sequence spans 339 residues: Endo-beta-N-acetylglucosaminidase F1 (339 aa).

A signal peptide (or 51, or 52) is located at residues 1 to 50 (MKKFINQFSASLKNNILVFLAFPFVWTSCARDNPLSSENSNISPNAAARA). Residues 60–326 (IKLFSFTEVN…KLIAKELYGD (267 aa)) enclose the GH18 domain. The active-site Proton donor is glutamate 182. Residue tryptophan 339 is a propeptide, removed in mature form.

The protein belongs to the glycosyl hydrolase 18 family. As to quaternary structure, monomer.

The protein localises to the secreted. The enzyme catalyses an N(4)-(oligosaccharide-(1-&gt;3)-[oligosaccharide-(1-&gt;6)]-beta-D-Man-(1-&gt;4)-beta-D-GlcNAc-(1-&gt;4)-alpha-D-GlcNAc)-L-asparaginyl-[protein] + H2O = an oligosaccharide-(1-&gt;3)-[oligosaccharide-(1-&gt;6)]-beta-D-Man-(1-&gt;4)-D-GlcNAc + N(4)-(N-acetyl-beta-D-glucosaminyl)-L-asparaginyl-[protein]. Its function is as follows. Endohydrolysis of the di-N-acetylchitobiosyl unit in high-mannose glycopeptides and glycoproteins. Does not hydrolyze complex bi- or triantennary glycans. The presence of a core-bound fucose impedes endo F1 hydrolysis. The protein is Endo-beta-N-acetylglucosaminidase F1 (endOF1) of Elizabethkingia meningoseptica (Chryseobacterium meningosepticum).